Reading from the N-terminus, the 554-residue chain is Urocanate hydratase (554 aa).

NAD(+)-binding positions include G51–G52, Q129, G175–G177, E195, N241–A242, Q262–H266, Y272–L273, and Y321. Residue C409 is part of the active site. Residue G491 coordinates NAD(+).

This sequence belongs to the urocanase family. The cofactor is NAD(+).

The protein resides in the cytoplasm. The catalysed reaction is 4-imidazolone-5-propanoate = trans-urocanate + H2O. Its pathway is amino-acid degradation; L-histidine degradation into L-glutamate; N-formimidoyl-L-glutamate from L-histidine: step 2/3. Its function is as follows. Catalyzes the conversion of urocanate to 4-imidazolone-5-propionate. The polypeptide is Urocanate hydratase (Methylobacterium nodulans (strain LMG 21967 / CNCM I-2342 / ORS 2060)).